We begin with the raw amino-acid sequence, 710 residues long: Exocyst complex component 5 (710 aa).

The stretch at 44-96 (DTFIQTIKDLKILQEKQQSKCERLEESLRQEKESHAKKIAKLQERHQTAIDVF) forms a coiled coil.

This sequence belongs to the SEC10 family. In terms of assembly, the exocyst complex is composed of Sec3/Exoc1, Sec5/Exoc2, Sec6/Exoc3, Sec8/Exoc4, Sec10/Exoc5, Sec15/Exoc6, Exo70/Exoc7 and Exo84/Exoc8.

Its function is as follows. Component of the exocyst complex involved in the docking of exocytic vesicles with fusion sites on the plasma membrane. In Drosophila melanogaster (Fruit fly), this protein is Exocyst complex component 5.